A 350-amino-acid chain; its full sequence is Protein RecA (350 aa).

66 to 73 (GPESSGKT) lines the ATP pocket.

This sequence belongs to the RecA family.

Its subcellular location is the cytoplasm. In terms of biological role, can catalyze the hydrolysis of ATP in the presence of single-stranded DNA, the ATP-dependent uptake of single-stranded DNA by duplex DNA, and the ATP-dependent hybridization of homologous single-stranded DNAs. It interacts with LexA causing its activation and leading to its autocatalytic cleavage. The polypeptide is Protein RecA (Nocardioides sp. (strain ATCC BAA-499 / JS614)).